A 500-amino-acid chain; its full sequence is Probable cytosol aminopeptidase (500 aa).

Mn(2+) contacts are provided by lysine 265 and aspartate 270. Lysine 277 is an active-site residue. Mn(2+) is bound by residues aspartate 288, aspartate 347, and glutamate 349. Arginine 351 is a catalytic residue.

It belongs to the peptidase M17 family. Requires Mn(2+) as cofactor.

The protein resides in the cytoplasm. It catalyses the reaction Release of an N-terminal amino acid, Xaa-|-Yaa-, in which Xaa is preferably Leu, but may be other amino acids including Pro although not Arg or Lys, and Yaa may be Pro. Amino acid amides and methyl esters are also readily hydrolyzed, but rates on arylamides are exceedingly low.. It carries out the reaction Release of an N-terminal amino acid, preferentially leucine, but not glutamic or aspartic acids.. Functionally, presumably involved in the processing and regular turnover of intracellular proteins. Catalyzes the removal of unsubstituted N-terminal amino acids from various peptides. This chain is Probable cytosol aminopeptidase, found in Rickettsia africae (strain ESF-5).